Consider the following 769-residue polypeptide: MSPKLPQHGTVGVRTPLVDGVEKVTGKAKYTADIAAPDALVGRILRSPHAHARILAIDTSAAEALEGVIAVCTGAETPVPFGVLPIAENEYPLARDKVRYRGDPVAAVAAIDEVTAEKALALIKVDYEVLPAYMTPKAAMKAGAIALHDDKPNNILREVHAEFGDVAAAFAEADLIREKTYTFAEVNHVHMELNATLAEYDPVRDMLTLNTTTQVPYYVHLKVAACLQMDSARIRVIKPFLGGGFGARTEGLHFEIIAGLLARKAKGTVRLLQTREETFIAHRGRPWTEVKMKIGLKKDGKIAALALEATQAGGAYAGYGIITILYTGALMHGLYHIPAIKHDAWRVYTNTPPCGAMRGHGTVDTRAAFEALLTEMGEELGIDSLKIRQINMLPQIPYVTMYAQRVMSYGVPECLEKVKAASGWEERKGKLPKGRGLGIALSHFVSGTSTPKHWTGEPHATVNLKLDFDGGITLLTGAADIGQGSNTMASQVAAEVLGVRLSRIRVISADSALTPKDNGSYSSRVTFMVGNASISAAEELKGVLVKAAAKKLDAREEDIEVIDEMFMVSGSQDPGLSFQEVVKAAMVDSGTITVKGTYTCPTEFQGDKKIRGSAIGATMGFCYAAQVVEASVDEITGKVTAHKVWVAVDVGKALNPLAVEGQTQGGVWMGMGQALSEETVYDNGRMVHGNILDYRVPTIVESPDIEVIIVESMDPNGPFGAKEASEGMLAGFLPAIHEAVYEAVGVRATDFPLSPDRITELLDAKEAAA.

Residues Q214, 244–245 (GF), 522–526 (SSRVT), 650–655 (VGKALN), and 722–725 (KEAS) each bind Mo-molybdopterin cytosine dinucleotide.

Belongs to the xanthine dehydrogenase family. As to quaternary structure, heterohexamer of two alpha, two beta and two gamma subunits. Mo-molybdopterin cytosine dinucleotide is required as a cofactor. Post-translationally, the N-terminus is blocked.

It carries out the reaction oxidized 2[4Fe-4S]-[ferredoxin] + benzoyl-CoA + H2O = 4-hydroxybenzoyl-CoA + reduced 2[4Fe-4S]-[ferredoxin] + 2 H(+). With respect to regulation, inactivated by low concentrations of cyanide in vitro. Functionally, component of a complex that catalyzes the reductive dehydroxylation of 4-hydroxybenzoyl-CoA to benzoyl-CoA. Reaction is not reversible. Is a key enzyme in the anaerobic degradation of phenolic compounds. The chain is 4-hydroxybenzoyl-CoA reductase subunit alpha (hcrA) from Thauera aromatica.